The primary structure comprises 204 residues: Tat proofreading chaperone DmsD (204 aa).

Belongs to the TorD/DmsD family. DmsD subfamily.

Its function is as follows. Required for biogenesis/assembly of DMSO reductase, but not for the interaction of the DmsA signal peptide with the Tat system. May be part of a chaperone cascade complex that facilitates a folding-maturation pathway for the substrate protein. This Escherichia coli O6:H1 (strain CFT073 / ATCC 700928 / UPEC) protein is Tat proofreading chaperone DmsD.